Here is a 511-residue protein sequence, read N- to C-terminus: Piperic acid synthase CYP719A37 (511 aa).

A helical membrane pass occupies residues 7 to 27 (VDPALFSAFVSIIFFFLGMFL). Cys-455 lines the heme pocket.

This sequence belongs to the cytochrome P450 family. It depends on heme as a cofactor. As to expression, specifically expressed in immature fruits and roots. Barely detectable in young leaves and flowering spadices.

The protein resides in the membrane. The protein localises to the endoplasmic reticulum membrane. The catalysed reaction is (E,E)-feruperate + reduced [NADPH--hemoprotein reductase] + O2 = (E,E)-piperate + oxidized [NADPH--hemoprotein reductase] + 2 H2O + H(+). The protein operates within aromatic compound metabolism. Its function is as follows. Cytochrome P450 monooxygenase involved in the biosynthesis of aromatic piperamides natural products such as piperine (1-piperoyl-piperidine), the pungent principle contributing, together with several terpenoids, to the aromatic properties of black pepper fruits, and displaying numerous pharmacological activities such as antiproliferative, antitumor, antiangiogenesis, antioxidant, antidiabetic, antiobesity, cardioprotective, antimicrobial, antiaging, and immunomodulatory effects. Catalyzes the conversion of feruperic acid (5-(4-hydroxy-3-methoxyphenyl)-2,4-pentadienoic acid) to piperic acid. Inactive toward ferulic acid and feruperine. In Piper nigrum (Black pepper), this protein is Piperic acid synthase CYP719A37.